The primary structure comprises 146 residues: Large ribosomal subunit protein uL15 (146 aa).

The segment covering 1–10 has biased composition (basic and acidic residues); that stretch reads MTLKLHDLRP. The disordered stretch occupies residues 1 to 41; sequence MTLKLHDLRPARGSKIARTRVGRGDGSKGKTAGRGTKGTRA.

Belongs to the universal ribosomal protein uL15 family. In terms of assembly, part of the 50S ribosomal subunit.

Binds to the 23S rRNA. The chain is Large ribosomal subunit protein uL15 from Mycobacterium tuberculosis (strain ATCC 25177 / H37Ra).